Here is a 173-residue protein sequence, read N- to C-terminus: Archaemetzincin (173 aa).

H130 provides a ligand contact to Zn(2+). Catalysis depends on E131, which acts as the Proton acceptor. H134, H140, C141, C146, C165, and C168 together coordinate Zn(2+).

Belongs to the peptidase M54 family. Monomer. Requires Zn(2+) as cofactor.

Its function is as follows. Probable zinc metalloprotease whose natural substrate is unknown. The protein is Archaemetzincin of Haloquadratum walsbyi (strain DSM 16790 / HBSQ001).